A 305-amino-acid polypeptide reads, in one-letter code: Nuclear egress protein 1 (305 aa).

Basic and acidic residues predominate over residues 1–11 (MDRERPRKTRE). The segment at 1–24 (MDRERPRKTREPASPGSVLSKRSK) is disordered. A CCCH-type zinc finger spans residues 104–230 (CLVLSPLGHA…FALFKTDDLH (127 aa)).

The protein belongs to the herpesviridae NEC1 protein family. In terms of assembly, forms a heterohexameric complex with NEC2. Interacts with capsid vertex specific component 2/CVC2; this interaction directs the capsid to the host inner nuclear membrane to initiate budding. Phosphorylated at serine residues in the N-terminus. This phosphorylation regulates the localization within the inner nuclear membrane.

The protein resides in the host nucleus inner membrane. Its function is as follows. Plays an essential role in virion nuclear egress, the first step of virion release from infected cell. Within the host nucleus, NEC1 interacts with the newly formed capsid through the vertexes and directs it to the inner nuclear membrane by associating with NEC2. Induces the budding of the capsid at the inner nuclear membrane as well as its envelopment into the perinuclear space. There, the NEC1/NEC2 complex promotes the fusion of the enveloped capsid with the outer nuclear membrane and the subsequent release of the viral capsid into the cytoplasm where it will reach the secondary budding sites in the host Golgi or trans-Golgi network. This Equus caballus (Horse) protein is Nuclear egress protein 1.